We begin with the raw amino-acid sequence, 115 residues long: Large ribosomal subunit protein mL60 (115 aa).

The transit peptide at 1-23 (MLGAFNSTLARFGGLVHKVPWRL) directs the protein to the mitochondrion. Residues 88–115 (AGLQGFRKGVHKSPKWTRSTNRVNPTGF) form a disordered region. Residues 103 to 115 (WTRSTNRVNPTGF) show a composition bias toward polar residues.

Belongs to the mitochondrion-specific ribosomal protein mL60 family. Component of the mitochondrial large ribosomal subunit (mt-LSU). Mature yeast 74S mitochondrial ribosomes consist of a small (37S) and a large (54S) subunit. The 37S small subunit contains a 15S ribosomal RNA (15S mt-rRNA) and at least 32 different proteins. The 54S large subunit contains a 21S rRNA (21S mt-rRNA) and at least 45 different proteins.

It is found in the mitochondrion. Functionally, component of the mitochondrial ribosome (mitoribosome), a dedicated translation machinery responsible for the synthesis of mitochondrial genome-encoded proteins, including at least some of the essential transmembrane subunits of the mitochondrial respiratory chain. The mitoribosomes are attached to the mitochondrial inner membrane and translation products are cotranslationally integrated into the membrane. The chain is Large ribosomal subunit protein mL60 (mrpl31) from Schizosaccharomyces pombe (strain 972 / ATCC 24843) (Fission yeast).